The chain runs to 402 residues: S-adenosylmethionine synthase (402 aa).

Histidine 15 is an ATP binding site. Aspartate 17 contacts Mg(2+). Glutamate 43 contacts K(+). 2 residues coordinate L-methionine: glutamate 56 and glutamine 99. A flexible loop region spans residues 99–109; it reads QSPDIAQGVDT. Residues 174–176, 247–248, aspartate 256, 262–263, alanine 279, and lysine 283 each bind ATP; these read DGK, RF, and RK. Aspartate 256 serves as a coordination point for L-methionine. Residue lysine 287 participates in L-methionine binding.

It belongs to the AdoMet synthase family. As to quaternary structure, homotetramer; dimer of dimers. Mg(2+) serves as cofactor. It depends on K(+) as a cofactor.

The protein resides in the cytoplasm. The enzyme catalyses L-methionine + ATP + H2O = S-adenosyl-L-methionine + phosphate + diphosphate. Its pathway is amino-acid biosynthesis; S-adenosyl-L-methionine biosynthesis; S-adenosyl-L-methionine from L-methionine: step 1/1. In terms of biological role, catalyzes the formation of S-adenosylmethionine (AdoMet) from methionine and ATP. The overall synthetic reaction is composed of two sequential steps, AdoMet formation and the subsequent tripolyphosphate hydrolysis which occurs prior to release of AdoMet from the enzyme. The chain is S-adenosylmethionine synthase from Streptomyces coelicolor (strain ATCC BAA-471 / A3(2) / M145).